Consider the following 247-residue polypeptide: Cell division protein ZapD (247 aa).

It belongs to the ZapD family. Interacts with FtsZ.

It localises to the cytoplasm. Cell division factor that enhances FtsZ-ring assembly. Directly interacts with FtsZ and promotes bundling of FtsZ protofilaments, with a reduction in FtsZ GTPase activity. In Salmonella dublin (strain CT_02021853), this protein is Cell division protein ZapD.